The primary structure comprises 206 residues: Large ribosomal subunit protein uL4 (206 aa).

The protein belongs to the universal ribosomal protein uL4 family. Part of the 50S ribosomal subunit.

Its function is as follows. One of the primary rRNA binding proteins, this protein initially binds near the 5'-end of the 23S rRNA. It is important during the early stages of 50S assembly. It makes multiple contacts with different domains of the 23S rRNA in the assembled 50S subunit and ribosome. In terms of biological role, forms part of the polypeptide exit tunnel. The protein is Large ribosomal subunit protein uL4 of Rhodopseudomonas palustris (strain ATCC BAA-98 / CGA009).